We begin with the raw amino-acid sequence, 181 residues long: CASP-like protein UU-1 (181 aa).

Topologically, residues 1–30 (MTMELESQEVVVETTTAAAAARAASAAHVR) are cytoplasmic. A helical membrane pass occupies residues 31–51 (TTVALRLLAFAASLAAAVVVA). The Extracellular portion of the chain corresponds to 52 to 65 (TNRQERWGITVTFK). A helical transmembrane segment spans residues 66 to 86 (MFAVWEAFVAINFACAAYALL). The Cytoplasmic portion of the chain corresponds to 87 to 107 (TAVFVKKLVSKHWLHHMDQFT). Residues 108 to 128 (VNLQAASTAGAGAVGSVAMWG) form a helical membrane-spanning segment. At 129–147 (NEPSGWYAVCRLYRLYCDR) the chain is on the extracellular side. Residues 148–168 (GAVSLALAFVAFVAFGVASSL) traverse the membrane as a helical segment. Topologically, residues 169–181 (SRYPRAPPPPAPR) are cytoplasmic.

This sequence belongs to the Casparian strip membrane proteins (CASP) family. As to quaternary structure, homodimer and heterodimers.

The protein resides in the cell membrane. The sequence is that of CASP-like protein UU-1 from Sorghum bicolor (Sorghum).